Consider the following 333-residue polypeptide: Ribose-phosphate pyrophosphokinase (333 aa).

58-60 (DGE) contributes to the ATP binding site. Residues H151 and D190 each coordinate Mg(2+). The active site involves K214. Residues R216, D240, and 244–248 (DTAGT) each bind D-ribose 5-phosphate.

Belongs to the ribose-phosphate pyrophosphokinase family. Class I subfamily. As to quaternary structure, homohexamer. The cofactor is Mg(2+).

Its subcellular location is the cytoplasm. It catalyses the reaction D-ribose 5-phosphate + ATP = 5-phospho-alpha-D-ribose 1-diphosphate + AMP + H(+). The protein operates within metabolic intermediate biosynthesis; 5-phospho-alpha-D-ribose 1-diphosphate biosynthesis; 5-phospho-alpha-D-ribose 1-diphosphate from D-ribose 5-phosphate (route I): step 1/1. In terms of biological role, involved in the biosynthesis of the central metabolite phospho-alpha-D-ribosyl-1-pyrophosphate (PRPP) via the transfer of pyrophosphoryl group from ATP to 1-hydroxyl of ribose-5-phosphate (Rib-5-P). The protein is Ribose-phosphate pyrophosphokinase of Synechocystis sp. (strain ATCC 27184 / PCC 6803 / Kazusa).